Reading from the N-terminus, the 456-residue chain is G-protein coupled receptor 39 (456 aa).

The Extracellular segment spans residues 1–34 (MASSSGSNHICSRVIDHSHVPEFEVATWIKITLI). Cystine bridges form between Cys-11/Cys-191 and Cys-108/Cys-210. Positions 17 and 19 each coordinate Zn(2+). The chain crosses the membrane as a helical span at residues 35–55 (LVYLIIFVVGILGNSVTIRVT). At 56 to 69 (QVLQKKGYLQKEVT) the chain is on the cytoplasmic side. The chain crosses the membrane as a helical span at residues 70–89 (DHMVSLACSDILVFLIGMPM). Over 90-109 (EFYSIIWNPLTTPSYALSCK) the chain is Extracellular. A helical transmembrane segment spans residues 110–131 (LHTFLFETCSYATLLHVLTLSF). At 132-151 (ERYIAICHPFKYKAVSGPRQ) the chain is on the cytoplasmic side. Residues 152–172 (VKLLIGFVWVTSALVALPLLF) traverse the membrane as a helical segment. Residues 173–217 (AMGIEYPLVNVPTHKGLNCNLSRTRHHDEPGNSNMSICTNLSNRW) lie on the Extracellular side of the membrane. 2 N-linked (GlcNAc...) asparagine glycosylation sites follow: Asn-192 and Asn-206. The helical transmembrane segment at 218 to 242 (EVFQSSIFGAFAVYLVVLASVAFMC) threads the bilayer. Residues 243 to 283 (WNMMKVLMKSKQGTLAGTGPQLQLRKSESEESRTARRQTII) are Cytoplasmic-facing. A helical transmembrane segment spans residues 284–305 (FLRLIVVTLAVCWMPNQIRRIM). Residues 306 to 323 (AAAKPKHDWTRTYFRAYM) lie on the Extracellular side of the membrane. Residues 324-344 (ILLPFSDTFFYLSSVVNPLLY) form a helical membrane-spanning segment. The Cytoplasmic portion of the chain corresponds to 345-456 (NVSSQQFRKV…TENSLQEQEV (112 aa)). Ser-397 carries the post-translational modification Phosphoserine. The interval 415–456 (FQTEAKPGEAKPQPLSPESPQTGSETKPAGSTTENSLQEQEV) is disordered. Residues 430 to 456 (SPESPQTGSETKPAGSTTENSLQEQEV) are compositionally biased toward polar residues.

It belongs to the G-protein coupled receptor 1 family. Interacts with HTR1A. Interacts with GALR1. In terms of tissue distribution, expression is detected in septumamygdala, parietal cells, enterocytes, neurons and pancreas, in peripheral organs such as the duodenum and kidney but not in the pituitary and hypothalamus.

It is found in the cell membrane. Zinc-sensing receptor that can sense changes in extracellular Zn(2+), mediate Zn(2+) signal transmission, and participates in the regulation of numerous physiological processes including glucose homeostasis regulation, gastrointestinal mobility, hormone secretion and cell death. Activation by Zn(2+) in keratinocytes increases the intracellular concentration of Ca(2+) and activates the ERK/MAPK and PI3K/AKT signaling pathways leading to epithelial repair. Plays an essential role in normal wound healing by inducing the production of cytokines including the major inflammatory cytokine IL6 via the PKC/MAPK/CEBPB pathway. Regulates adipose tissue metabolism, especially lipolysis, and regulates the function of lipases, such as hormone-sensitive lipase and adipose triglyceride lipase. Plays a role in the inhibition of cell death and protects against oxidative, endoplasmic reticulum and mitochondrial stress by inducing secretion of the cytoprotective pigment epithelium-derived growth factor (PEDF) and probably other protective transcripts in a GNA13/RHOA/SRE-dependent manner. Forms dynamic heteroreceptor complexes with HTR1A and GALR1 depending on cell type or specific physiological states, resulting in signaling diversity: HTR1A-GPR39 shows additive increase in signaling along the serum response element (SRE) and NF-kappa-B pathways while GALR1 acts as an antagonist blocking SRE. The protein is G-protein coupled receptor 39 (Gpr39) of Mus musculus (Mouse).